A 124-amino-acid chain; its full sequence is Histone H2A (124 aa).

Positions 1-18 are enriched in basic residues; the sequence is MSGRGKGGKVKGKAKSRS. A disordered region spans residues 1–21; it reads MSGRGKGGKVKGKAKSRSNRA. At serine 2 the chain carries N-acetylserine. Serine 2 is modified (phosphoserine). Lysine 36 bears the N6-succinyllysine mark. At glutamine 104 the chain carries N5-methylglutamine. Residue lysine 119 forms a Glycyl lysine isopeptide (Lys-Gly) (interchain with G-Cter in ubiquitin) linkage. Phosphothreonine is present on threonine 120.

The protein belongs to the histone H2A family. The nucleosome is a histone octamer containing two molecules each of H2A, H2B, H3 and H4 assembled in one H3-H4 heterotetramer and two H2A-H2B heterodimers. The octamer wraps approximately 147 bp of DNA. In terms of processing, the chromatin-associated form, but not the free cytoplasmic form, is phosphorylated on Thr-120 by NHK-1 during mitosis, and dephosphorylated during S-phase. Also phosphorylated on Thr-120 by NHK-1 during prophase I of meiosis; which is required for acetylation of H3 'Lys-14' and H4 'Lys-5', diassembly of the synaptonemal complex, and karyosome formation. Monoubiquitination of Lys-119 by sce/dRING gives a specific tag for epigenetic transcriptional repression. Post-translationally, phosphorylation on Ser-2 is enhanced during mitosis. Phosphorylation on Ser-2 directly represses transcription.

The protein resides in the nucleus. The protein localises to the chromosome. In terms of biological role, core component of nucleosome. Nucleosomes wrap and compact DNA into chromatin, limiting DNA accessibility to the cellular machineries which require DNA as a template. Histones thereby play a central role in transcription regulation, DNA repair, DNA replication and chromosomal stability. DNA accessibility is regulated via a complex set of post-translational modifications of histones, also called histone code, and nucleosome remodeling. This chain is Histone H2A (His2A), found in Drosophila erecta (Fruit fly).